The following is a 275-amino-acid chain: MSQIKPSDIDLSTEICGARQLNVLQRHHMAEPQLDWLAEEVPVALVYNGISHVVMMATPKDLEAFALGFSLSEGIITAPQEIYAIDVTPSCNGIEVNIELSSRRFAGLKERRRAMAGRTGCGVCGIEQLDDIFRPIAPLPFTQTFNLNQLDNALAQLKQVQTVGQLTGCTHAAAWINPQGELLGGCEDVGRHVALDKLLGVRAKQPWQQGAVLVSSRASYEMVQKTAMCGAEILFAVSAATTLAVEVAERYNLTLVGFSKPGRATVYTHPNRIQE.

Cysteine 121 acts as the Cysteine persulfide intermediate in catalysis. Residue 258–263 coordinates Mo-bis(molybdopterin guanine dinucleotide); it reads FSKPGR.

The protein belongs to the FdhD family.

Its subcellular location is the cytoplasm. Required for formate dehydrogenase (FDH) activity. Acts as a sulfur carrier protein that transfers sulfur from IscS to the molybdenum cofactor prior to its insertion into FDH. This Yersinia enterocolitica serotype O:8 / biotype 1B (strain NCTC 13174 / 8081) protein is Sulfur carrier protein FdhD.